We begin with the raw amino-acid sequence, 300 residues long: GTPase Era (300 aa).

One can recognise an Era-type G domain in the interval 8–176; that stretch reads RCGYVAIVGR…EALIAKHLPE (169 aa). The segment at 16–23 is G1; sequence GRPNVGKS. 16–23 lines the GTP pocket; it reads GRPNVGKS. Positions 42–46 are G2; sequence QTTRH. The segment at 63–66 is G3; sequence DTPG. GTP contacts are provided by residues 63–67 and 125–128; these read DTPGM and NKTD. The tract at residues 125–128 is G4; it reads NKTD. Positions 155 to 157 are G5; that stretch reads ISA. The KH type-2 domain occupies 199–283; it reads VREKIMRQLG…MLNLWVKVKG (85 aa).

It belongs to the TRAFAC class TrmE-Era-EngA-EngB-Septin-like GTPase superfamily. Era GTPase family. As to quaternary structure, monomer.

It is found in the cytoplasm. It localises to the cell inner membrane. Functionally, an essential GTPase that binds both GDP and GTP, with rapid nucleotide exchange. Plays a role in 16S rRNA processing and 30S ribosomal subunit biogenesis and possibly also in cell cycle regulation and energy metabolism. In Pseudomonas putida (strain W619), this protein is GTPase Era.